A 412-amino-acid chain; its full sequence is MVVRALVRAHPLSRISCRYSSLAASSFNPKPYIPSVSGVQKSLPFDNLLEQYSRVHWDDTVTYDDPTVQRLFKNLMSGSRAALASAITLVESRHPTKRAQGNMLLKMVLDEEREKYKKYGRDSMIFRVGISGSPGVGKSSFIEALGAELTENRGKKVAVLTIDPTSAMTGGSVLGDLTRMQELSRNPRAYIRQSPTSGSLGGVTRGIHEAVILCEGAGYDIVIIETVGVGQSETSVSDMCDMMCLLLSPAHGDELQGVKRGIMEMSDLLVVTKDDGDLQAKAKMTQAEYISALKFMRPRLDVWSPKVMRSSIMNKESVSAVCTSLYEFWDTIGESGDLERRRQDQMKKWMWNHVKDEIMAVFQKHPKIIHLKNHKIFINLLLQAPKLEKDISSGKITPGLAAETMIRTFFGV.

Residues 1–15 (MVVRALVRAHPLSRI) constitute a mitochondrion transit peptide. Residues 132-140 (GSPGVGKSS), aspartate 275, and 311-313 (SIM) contribute to the GTP site.

This sequence belongs to the SIMIBI class G3E GTPase family. ArgK/MeaB subfamily.

The protein localises to the mitochondrion. Functionally, may have GTPase activity. May also bind and hydrolyze ATP. May function as chaperone. Likely to have a role in propionyl-CoA metabolism and adenosylcobalamin synthesis. The polypeptide is Methylmalonic aciduria type A homolog, mitochondrial (Caenorhabditis briggsae).